A 324-amino-acid polypeptide reads, in one-letter code: uncharacterized protein (324 aa).

Residues 1–58 (MDIKVMEYAAEIARRQSFTKAAEHLHIAQPSLSQQIKKLEAELGLTLFHRSHGSVTLT) form the HTH lysR-type domain. Residues 18–37 (FTKAAEHLHIAQPSLSQQIK) constitute a DNA-binding region (H-T-H motif).

This sequence belongs to the LysR transcriptional regulatory family.

This is an uncharacterized protein from Bacillus subtilis (strain 168).